An 80-amino-acid chain; its full sequence is MPKRILQGTVTSDKNEQTVTVLVERRFKHPLLKKTVRLSKKYRAHDPENQFKVGDVVRIEECAPISKTKRWKVVTEAVTA.

This sequence belongs to the universal ribosomal protein uS17 family. As to quaternary structure, part of the 30S ribosomal subunit.

In terms of biological role, one of the primary rRNA binding proteins, it binds specifically to the 5'-end of 16S ribosomal RNA. The sequence is that of Small ribosomal subunit protein uS17 from Cereibacter sphaeroides (strain ATCC 17025 / ATH 2.4.3) (Rhodobacter sphaeroides).